Consider the following 369-residue polypeptide: Flagellar P-ring protein (369 aa).

Positions 1–23 (MRIASFFTVLLTLLTLNIAPASA) are cleaved as a signal peptide.

This sequence belongs to the FlgI family. As to quaternary structure, the basal body constitutes a major portion of the flagellar organelle and consists of four rings (L,P,S, and M) mounted on a central rod.

It is found in the periplasm. It localises to the bacterial flagellum basal body. Functionally, assembles around the rod to form the L-ring and probably protects the motor/basal body from shearing forces during rotation. This is Flagellar P-ring protein from Pectobacterium carotovorum subsp. carotovorum (strain PC1).